Reading from the N-terminus, the 270-residue chain is Formamidopyrimidine-DNA glycosylase (270 aa).

P2 (schiff-base intermediate with DNA) is an active-site residue. The Proton donor role is filled by E3. K58 serves as the catalytic Proton donor; for beta-elimination activity. The DNA site is built by H91, R109, and R151. The FPG-type zinc finger occupies 236–270 (LVYGRGGEACKTCQKPLKEIRMNDRTTVYCVTCQQ). The active-site Proton donor; for delta-elimination activity is the R260.

It belongs to the FPG family. As to quaternary structure, monomer. Requires Zn(2+) as cofactor.

It catalyses the reaction Hydrolysis of DNA containing ring-opened 7-methylguanine residues, releasing 2,6-diamino-4-hydroxy-5-(N-methyl)formamidopyrimidine.. The catalysed reaction is 2'-deoxyribonucleotide-(2'-deoxyribose 5'-phosphate)-2'-deoxyribonucleotide-DNA = a 3'-end 2'-deoxyribonucleotide-(2,3-dehydro-2,3-deoxyribose 5'-phosphate)-DNA + a 5'-end 5'-phospho-2'-deoxyribonucleoside-DNA + H(+). Functionally, involved in base excision repair of DNA damaged by oxidation or by mutagenic agents. Acts as a DNA glycosylase that recognizes and removes damaged bases. Has a preference for oxidized purines, such as 7,8-dihydro-8-oxoguanine (8-oxoG). Has AP (apurinic/apyrimidinic) lyase activity and introduces nicks in the DNA strand. Cleaves the DNA backbone by beta-delta elimination to generate a single-strand break at the site of the removed base with both 3'- and 5'-phosphates. The sequence is that of Formamidopyrimidine-DNA glycosylase from Cellvibrio japonicus (strain Ueda107) (Pseudomonas fluorescens subsp. cellulosa).